The primary structure comprises 399 residues: Zinc finger HIT domain-containing protein 2 (399 aa).

Residue M1 is modified to N-acetylmethionine. Zn(2+)-binding residues include C7, C10, C22, C25, C30, C34, H38, and C41. The HIT-type zinc finger occupies 7–41 (CGFCPAGEALPARYTCPRCNAPYCSLRCYRAHGAC). 2 disordered regions span residues 70–97 (RLRE…GLSG) and 152–175 (AEPE…AEPF). The segment covering 86–96 (LGPGARPGGLS) has biased composition (gly residues). A Phosphothreonine modification is found at T161.

In terms of assembly, interacts (via HIT-type zinc finger) with RUVBL2 in the presence of ATP or ADP; shows a stronger interaction in the presence of ADP. In terms of tissue distribution, low expression in most tissues; highly expressed in testis; particularly in seminiferous tubules.

May act as a bridging factor mediating the interaction between the R2TP/Prefoldin-like (R2TP/PFDL) complex and U5 small nuclear ribonucleoprotein (U5 snRNP). Required for the interaction of R2TP complex subunit RPAP3 and prefoldin-like subunit URI1 with U5 snRNP proteins EFTUD2 and PRPF8. May play a role in regulating the composition of the U5 snRNP complex. The chain is Zinc finger HIT domain-containing protein 2 (Znhit2) from Mus musculus (Mouse).